The chain runs to 150 residues: Oleosin Ara h 10.0102 (150 aa).

2 consecutive transmembrane segments (helical) span residues 39-59 and 73-93; these read VIAVITGLPIGGTLLLFAGLA and LFILFSPVIVPATIVVGLSVA.

Belongs to the oleosin family. As to expression, expressed in seeds (at protein level).

It is found in the lipid droplet. The protein localises to the membrane. Its function is as follows. May have a structural role to stabilize the lipid body during desiccation of the seed by preventing coalescence of the oil. Probably interacts with both lipid and phospholipid moieties of lipid bodies. May also provide recognition signals for specific lipase anchorage in lipolysis during seedling growth. This is Oleosin Ara h 10.0102 from Arachis hypogaea (Peanut).